The sequence spans 288 residues: Lysosomal thioesterase PPT2-B (288 aa).

The first 20 residues, 1-20 (MRGYLLLLPLLLCLVDNSVS), serve as a signal peptide directing secretion. Residues Cys-95 and Cys-103 are joined by a disulfide bond. Ser-97 functions as the Nucleophile in the catalytic mechanism. An N-linked (GlcNAc...) asparagine glycan is attached at Asn-143. Cysteines 151 and 162 form a disulfide. N-linked (GlcNAc...) asparagine glycosylation is present at Asn-192. Active-site residues include Asp-214 and His-269. Residue Asn-275 is glycosylated (N-linked (GlcNAc...) asparagine).

It belongs to the palmitoyl-protein thioesterase family.

It localises to the lysosome. The enzyme catalyses hexadecanoyl-CoA + H2O = hexadecanoate + CoA + H(+). It carries out the reaction S-hexadecanoyl-N-acetylcysteamine + H2O = N-acetylcysteamine + hexadecanoate + H(+). Functionally, catalyzes the cleavage of thioester bonds from S-palmitoyl-CoA or S-palmitoyl-N-acetylcysteamine (unbranched structures) but does not have activity against palmitoylcysteine or palmitoylated proteins, branched structures or bulky head groups. Conversely, hydrolyzes both long and short chain fatty acyl-CoA substrate. The polypeptide is Lysosomal thioesterase PPT2-B (ppt2-b) (Xenopus laevis (African clawed frog)).